The primary structure comprises 60 residues: MDPCECSKTGNCTCGGSCTCKNCSCTSCKKSCCSCCPSGCSKCASGCVCKGKTCDTSCCQ.

The beta stretch occupies residues 1-28 (MDPCECSKTGNCTCGGSCTCKNCSCTSC). The a divalent metal cation site is built by C4, C6, C12, C14, C18, C20, C23, C25, C28, C32, C33, C35, C36, C40, C43, C47, C49, C54, C58, and C59. An alpha region spans residues 29-60 (KKSCCSCCPSGCSKCASGCVCKGKTCDTSCCQ).

This sequence belongs to the metallothionein superfamily. Type 1 family.

Its function is as follows. Metallothioneins have a high content of cysteine residues that bind various heavy metals. This is Metallothionein (mt) from Gobiomorphus cotidianus (New Zealand common bully).